Reading from the N-terminus, the 426-residue chain is Histidinol dehydrogenase (426 aa).

3 residues coordinate NAD(+): tyrosine 130, glutamine 187, and asparagine 210. Positions 233, 255, and 258 each coordinate substrate. Zn(2+) contacts are provided by glutamine 255 and histidine 258. Active-site proton acceptor residues include glutamate 323 and histidine 324. Histidine 324, aspartate 357, glutamate 411, and histidine 416 together coordinate substrate. Aspartate 357 is a binding site for Zn(2+). A Zn(2+)-binding site is contributed by histidine 416.

Belongs to the histidinol dehydrogenase family. Zn(2+) is required as a cofactor.

The enzyme catalyses L-histidinol + 2 NAD(+) + H2O = L-histidine + 2 NADH + 3 H(+). Its pathway is amino-acid biosynthesis; L-histidine biosynthesis; L-histidine from 5-phospho-alpha-D-ribose 1-diphosphate: step 9/9. Catalyzes the sequential NAD-dependent oxidations of L-histidinol to L-histidinaldehyde and then to L-histidine. This is Histidinol dehydrogenase (hisD) from Aquifex aeolicus (strain VF5).